Consider the following 62-residue polypeptide: UPF0434 protein Fphi_1862 (62 aa).

The protein belongs to the UPF0434 family.

This is UPF0434 protein Fphi_1862 from Francisella philomiragia subsp. philomiragia (strain ATCC 25017 / CCUG 19701 / FSC 153 / O#319-036).